We begin with the raw amino-acid sequence, 473 residues long: Photosystem II CP43 reaction center protein (473 aa).

Residues 1-14 (MKILYSLRRFYHVE) constitute a propeptide that is removed on maturation. Residue T15 is modified to N-acetylthreonine. T15 bears the Phosphothreonine mark. The next 5 membrane-spanning stretches (helical) occupy residues 69–93 (LFEV…PHLA), 134–155 (LLGP…KDRN), 178–200 (KALY…RKIT), 255–275 (KPFA…LSYS), and 291–312 (WFNN…ASQA). E367 lines the [CaMn4O5] cluster pocket. A helical transmembrane segment spans residues 447-471 (RARAAAAGFEKGIDRDLEPVLYMTP).

Belongs to the PsbB/PsbC family. PsbC subfamily. In terms of assembly, PSII is composed of 1 copy each of membrane proteins PsbA, PsbB, PsbC, PsbD, PsbE, PsbF, PsbH, PsbI, PsbJ, PsbK, PsbL, PsbM, PsbT, PsbX, PsbY, PsbZ, Psb30/Ycf12, at least 3 peripheral proteins of the oxygen-evolving complex and a large number of cofactors. It forms dimeric complexes. Requires Binds multiple chlorophylls and provides some of the ligands for the Ca-4Mn-5O cluster of the oxygen-evolving complex. It may also provide a ligand for a Cl- that is required for oxygen evolution. PSII binds additional chlorophylls, carotenoids and specific lipids. as cofactor.

The protein localises to the plastid. The protein resides in the chloroplast thylakoid membrane. One of the components of the core complex of photosystem II (PSII). It binds chlorophyll and helps catalyze the primary light-induced photochemical processes of PSII. PSII is a light-driven water:plastoquinone oxidoreductase, using light energy to abstract electrons from H(2)O, generating O(2) and a proton gradient subsequently used for ATP formation. The protein is Photosystem II CP43 reaction center protein of Saccharum hybrid (Sugarcane).